The following is a 296-amino-acid chain: Polyamine aminopropyltransferase (296 aa).

The 234-residue stretch at 5–238 (ELWYETLHAN…GIMTFAWATQ (234 aa)) folds into the PABS domain. Residue Gln33 participates in S-methyl-5'-thioadenosine binding. Residues His64 and Asp88 each contribute to the spermidine site. Residues Glu108 and 140–141 (DG) contribute to the S-methyl-5'-thioadenosine site. Catalysis depends on Asp158, which acts as the Proton acceptor. 158–161 (DCTD) is a spermidine binding site. Pro165 lines the S-methyl-5'-thioadenosine pocket.

Belongs to the spermidine/spermine synthase family. In terms of assembly, homodimer or homotetramer.

It localises to the cytoplasm. It carries out the reaction S-adenosyl 3-(methylsulfanyl)propylamine + putrescine = S-methyl-5'-thioadenosine + spermidine + H(+). Its pathway is amine and polyamine biosynthesis; spermidine biosynthesis; spermidine from putrescine: step 1/1. Its function is as follows. Catalyzes the irreversible transfer of a propylamine group from the amino donor S-adenosylmethioninamine (decarboxy-AdoMet) to putrescine (1,4-diaminobutane) to yield spermidine. The protein is Polyamine aminopropyltransferase of Yersinia pseudotuberculosis serotype O:1b (strain IP 31758).